A 232-amino-acid chain; its full sequence is uncharacterized protein (232 aa).

Positions 1 to 46 (MNAHNMRGPPGDLAKVVPGSRSGWNEGSRCRQADKGDGQCRNGGRD) are disordered. Basic and acidic residues predominate over residues 28 to 46 (SRCRQADKGDGQCRNGGRD).

This is an uncharacterized protein from Rhizobium meliloti (Ensifer meliloti).